The sequence spans 77 residues: U8-lycotoxin-Ls1b (77 aa).

An N-terminal signal peptide occupies residues 1–20 (MKLIIFTGLVLFAIVSLIEA). Residues 21 to 26 (QAENEK) constitute a propeptide that is removed on maturation.

This sequence belongs to the neurotoxin 19 (CSTX) family. 08 (U8-Lctx) subfamily. Post-translationally, contains 4 disulfide bonds. In terms of tissue distribution, expressed by the venom gland.

The protein localises to the secreted. The sequence is that of U8-lycotoxin-Ls1b from Lycosa singoriensis (Wolf spider).